A 1158-amino-acid polypeptide reads, in one-letter code: cGMP-specific 3',5'-cyclic phosphodiesterase (1158 aa).

Disordered stretches follow at residues 1-137 (MTDV…SQHD) and 195-216 (SPTV…SIPE). The segment covering 30–71 (ATTSAAASASSSQAKPLTNGAKKAATAAAAAGAEEGGASASN) has biased composition (low complexity). The span at 108–135 (GSTSKSSSIHTQTSQQERAGRPTSSASQ) shows a compositional bias: polar residues. Residues 202–215 (SPRSLSNSSASSIP) are compositionally biased toward low complexity. 2 GAF domains span residues 242–394 (DIDV…GIGI) and 426–640 (NLEC…GLGI). Residues 670 to 993 (SQDQTEKLTQ…RNWQDLAEKV (324 aa)) enclose the PDEase domain. The active-site Proton donor is His-746. Residues His-750, His-786, Asp-787, and Asp-897 each coordinate a divalent metal cation. 2 disordered regions span residues 1034 to 1065 (QSQQ…TGAL) and 1097 to 1158 (VSED…CALL). Positions 1041–1052 (GSEDSHTPEHQR) are enriched in basic and acidic residues. Residues 1114 to 1130 (AAGSMGRMSASSSTSSA) show a composition bias toward low complexity. Residues 1148-1158 (SKKRSKLCALL) show a composition bias toward basic residues. Cys-1155 is modified (cysteine methyl ester). Cys-1155 carries S-farnesyl cysteine lipidation. The propeptide at 1156 to 1158 (ALL) is removed in mature form.

The protein belongs to the cyclic nucleotide phosphodiesterase family. Interacts with PrBP. The cofactor is a divalent metal cation.

It is found in the cell membrane. It carries out the reaction 3',5'-cyclic GMP + H2O = GMP + H(+). Has a role regulating cGMP transport in Malpighian tubule principal cells. The polypeptide is cGMP-specific 3',5'-cyclic phosphodiesterase (Drosophila ananassae (Fruit fly)).